The sequence spans 467 residues: MLEDRSPDSCLSTRVFSSSRLSESNWSNSYMYPEDDDKLLGNGKRALEVVGEVRQTKSLKLMGFSIIYDSDSSDYSLSGGEEQADAAIGDGSSSRQEQEQQSDFNDNGGDSSDSHSLINEIGRDNSIDCLIRCSRSDYGSIASLNRNFRSLVKSGEIYRLRRQNGFVEHWVYFSCQLLEWVAFDPVERRWMQLPTMPSSVTFMCADKESLAVGTDLLVLGKDDFSSHVIYRYSLLTNSWSSGMKMNSPRCLFGSASLGEIAIFAGGCDSQGKILDFAEMYNSELQTWITLPRMNKPRKMCSGVFMDGKFYVIGGIGGADSKGLTCGEEYDLETKKWTQIPDLSPPRSRADQADMSPAAEAPPLVAVVNNQLYAADHADMEVRKYDKENKKWLTVGRLPERAGSVNGWGLAFRACGERLIVIGGPKCSGGGFIELNSWIPSDGGPPQWTLLDRKHSPTFVYNCAVMGC.

Positions 77-117 (LSGGEEQADAAIGDGSSSRQEQEQQSDFNDNGGDSSDSHSL) are disordered. Residues 92 to 111 (SSSRQEQEQQSDFNDNGGDS) are compositionally biased toward low complexity. Positions 116–163 (SLINEIGRDNSIDCLIRCSRSDYGSIASLNRNFRSLVKSGEIYRLRRQ) constitute an F-box domain. Kelch repeat units follow at residues 159 to 210 (RLRR…KESL), 215 to 259 (DLLV…SLGE), 261 to 307 (AIFA…FMDG), 308 to 356 (KFYV…DMSP), and 365 to 411 (AVVN…GLAF).

In terms of assembly, part of a SCF (ASK-cullin-F-box) protein ligase complex. Interacts with SKP1A/ASK1 and SPK1B/ASK2.

The protein resides in the nucleus. It functions in the pathway protein modification; protein ubiquitination. Its function is as follows. Component of SCF(ASK-cullin-F-box) E3 ubiquitin ligase complexes, which may mediate the ubiquitination and subsequent proteasomal degradation of target proteins. The sequence is that of F-box/kelch-repeat protein SKIP11 (SKIP11) from Arabidopsis thaliana (Mouse-ear cress).